The primary structure comprises 289 residues: Ribosomal protein L11 methyltransferase (289 aa).

S-adenosyl-L-methionine-binding residues include T135, G156, D179, and N225.

The protein belongs to the methyltransferase superfamily. PrmA family.

It localises to the cytoplasm. The catalysed reaction is L-lysyl-[protein] + 3 S-adenosyl-L-methionine = N(6),N(6),N(6)-trimethyl-L-lysyl-[protein] + 3 S-adenosyl-L-homocysteine + 3 H(+). Functionally, methylates ribosomal protein L11. This Chlorobaculum parvum (strain DSM 263 / NCIMB 8327) (Chlorobium vibrioforme subsp. thiosulfatophilum) protein is Ribosomal protein L11 methyltransferase.